We begin with the raw amino-acid sequence, 444 residues long: MKKYDRGWASLETGAALLIVMLLIAWGAGIWQDYIQTKGWQTEARLVSNWTSAARSYIGKNYTTLQGSSTTTTPAVITTTMLKNTGFLSSGFTETNSEGQRLQAYVVRNAQNPELLQAMVVSSGGTPYPVKALIQMAKDITTGLGGYIQDGKTATGALRSWSVALSNYGAKSGNGHIAVLLSTDELSGAAEDTDRLYRFQVNGRPDLNKMHTAIDMGSNNLNNVGAVNAQTGNFSGNVNGVNGTFSGQVKGNSGNFDVNVTAGGDIRSNNGWLITRNSKGWLNETHGGGFYMSDGSWVRSVNNKGIYTGGQVKGGTVRADGRLYTGEYLQLERTAVAGASCSPNGLVGRDNTGAILSCQSGTWRKVGSGELQIATAQATGWRFPGATATCPTGKRVTGGGGICTSRTGYIWLTRSFPSANNSWSAACDTTEDQNGSITVYAICQ.

A constant region region spans residues 1–361; the sequence is MKKYDRGWAS…TGAILSCQSG (361 aa). Positions 362–444 are variable region; sequence TWRKVGSGEL…GSITVYAICQ (83 aa).

The chain is Shufflon protein B' from Escherichia coli.